The following is a 352-amino-acid chain: Chorismate synthase (352 aa).

Arg48 contacts NADP(+). FMN contacts are provided by residues 125 to 127 (RSS), 238 to 239 (NA), Gly278, 293 to 297 (KPTSS), and Arg319.

Belongs to the chorismate synthase family. In terms of assembly, homotetramer. FMNH2 serves as cofactor.

It catalyses the reaction 5-O-(1-carboxyvinyl)-3-phosphoshikimate = chorismate + phosphate. It functions in the pathway metabolic intermediate biosynthesis; chorismate biosynthesis; chorismate from D-erythrose 4-phosphate and phosphoenolpyruvate: step 7/7. Catalyzes the anti-1,4-elimination of the C-3 phosphate and the C-6 proR hydrogen from 5-enolpyruvylshikimate-3-phosphate (EPSP) to yield chorismate, which is the branch point compound that serves as the starting substrate for the three terminal pathways of aromatic amino acid biosynthesis. This reaction introduces a second double bond into the aromatic ring system. The chain is Chorismate synthase from Legionella pneumophila (strain Lens).